The chain runs to 303 residues: MTNTTMQPNRLRIALQKKGRLSQDCAILLKQCGVKINWNEQRLIAYAENLPIEILRVRDDDIPGLIFDGVVDLGIIGENVLEEEELGRRAANETVTYKKLRQLDFGDCRLSLAVDRDCHYENVKDLANRRIATSYPHLLKRYMNENGVSFKSCLLNGSVEVAPSAGIAYAICDLVSSGATLEANGLKEVDVIYRSKACLIQRAEPLESTKQALVDKLLTRIQGVQQAAESKYIMLHAPKEKLEKITALLPGVENPTILPLASDTTRVAMHVVSQENLFWETMEQLKEAGASSILVLPIEKMME.

The protein belongs to the ATP phosphoribosyltransferase family. Long subfamily. It depends on Mg(2+) as a cofactor.

The protein localises to the cytoplasm. It carries out the reaction 1-(5-phospho-beta-D-ribosyl)-ATP + diphosphate = 5-phospho-alpha-D-ribose 1-diphosphate + ATP. Its pathway is amino-acid biosynthesis; L-histidine biosynthesis; L-histidine from 5-phospho-alpha-D-ribose 1-diphosphate: step 1/9. Feedback inhibited by histidine. In terms of biological role, catalyzes the condensation of ATP and 5-phosphoribose 1-diphosphate to form N'-(5'-phosphoribosyl)-ATP (PR-ATP). Has a crucial role in the pathway because the rate of histidine biosynthesis seems to be controlled primarily by regulation of HisG enzymatic activity. This chain is ATP phosphoribosyltransferase, found in Haemophilus influenzae (strain 86-028NP).